Reading from the N-terminus, the 318-residue chain is 1-aminocyclopropane-1-carboxylate oxidase (318 aa).

The 101-residue stretch at 153–253 folds into the Fe2OG dioxygenase domain; the sequence is PNFGTKVANY…RMSIASFYNP (101 aa). Fe cation contacts are provided by His177, Asp179, and His234.

This sequence belongs to the iron/ascorbate-dependent oxidoreductase family. Fe cation serves as cofactor.

It catalyses the reaction 1-aminocyclopropane-1-carboxylate + L-ascorbate + O2 = ethene + L-dehydroascorbate + hydrogen cyanide + CO2 + 2 H2O. It functions in the pathway alkene biosynthesis; ethylene biosynthesis via S-adenosyl-L-methionine; ethylene from S-adenosyl-L-methionine: step 2/2. The protein is 1-aminocyclopropane-1-carboxylate oxidase (DK-ACO1) of Diospyros kaki (Kaki persimmon).